Here is a 226-residue protein sequence, read N- to C-terminus: Ribonuclease HII (226 aa).

Positions 29-220 constitute an RNase H type-2 domain; sequence GPVAGVDEAG…VVAAGVRLEQ (192 aa). Residues D35, E36, and D129 each contribute to the a divalent metal cation site.

It belongs to the RNase HII family. Mn(2+) is required as a cofactor. The cofactor is Mg(2+).

The protein resides in the cytoplasm. It catalyses the reaction Endonucleolytic cleavage to 5'-phosphomonoester.. Its function is as follows. Endonuclease that specifically degrades the RNA of RNA-DNA hybrids. This Rhodococcus erythropolis (strain PR4 / NBRC 100887) protein is Ribonuclease HII.